The following is a 91-amino-acid chain: Potassium channel toxin BmTXK-beta-2 (91 aa).

The signal sequence occupies residues 1–19; that stretch reads MQRNLVVLLFLGMVALSSC. A propeptide spanning residues 20–27 is cleaved from the precursor; that stretch reads GLREKHFQ. One can recognise a BetaSPN-type CS-alpha/beta domain in the interval 54-91; sequence QFGCPAYQGYCDDHCQDIKKEEGFCHGFKCKCGIPMGF. Disulfide bonds link Cys-57–Cys-78, Cys-64–Cys-83, and Cys-68–Cys-85.

The protein belongs to the long chain scorpion toxin family. Class 1 subfamily. As to expression, expressed by the venom gland.

Its subcellular location is the secreted. Functionally, inhibits voltage-gated potassium channel. The protein is Potassium channel toxin BmTXK-beta-2 of Olivierus martensii (Manchurian scorpion).